The following is a 60-amino-acid chain: DNA-directed RNA polymerase subunit Rpo6 (60 aa).

This sequence belongs to the archaeal Rpo6/eukaryotic RPB6 RNA polymerase subunit family. In terms of assembly, part of the RNA polymerase complex.

The protein resides in the cytoplasm. The catalysed reaction is RNA(n) + a ribonucleoside 5'-triphosphate = RNA(n+1) + diphosphate. Functionally, DNA-dependent RNA polymerase (RNAP) catalyzes the transcription of DNA into RNA using the four ribonucleoside triphosphates as substrates. The polypeptide is DNA-directed RNA polymerase subunit Rpo6 (Methanosarcina acetivorans (strain ATCC 35395 / DSM 2834 / JCM 12185 / C2A)).